The chain runs to 533 residues: MGNCFTKTYEIPITSGTMRRPASTAERSKARGGDEPGTWRRPSFPRHGAPPHRPPTGSSSAAGALSRRASGGGGEMGPVLQRAMVSVRSLYQLDRKLGSGQFGTTYLCTERATGNRYACKSVSKRKLVRRTDVDDVRREITILQHLSGQPNIAEFRGAYEDNDHVHLVMEFCSGGELFDRITAKGSYSERQAAAVCRDILTVVHVCHFMGVIHRDLKPENFLLASADDDAPLKAIDFGLSVFIEEGKVYKDIVGSAYYVAPEVLQRNYGKEADIWSAGVILYILLCGTPPFWAETEKGIFDAILVNQVDFSTSPWPSISESAKDLIRQMLHRDPQKRITASQALEHRWLKEGGASDRPIDSAVLSRMKQFKAMNKLKQLALKVIAENLSPEEIKGLKQMFNNMDTDRSGTITVEELKVGLTKLGSRISEAEVQKLMEAVDVDKSGSIDYSEFLTAMINKHKLEKEEDLLRAFQHFDKDNSGYITRDELEQAMAEYGMGDEANIKQVLDEVDKDKDGRIDYEEFVEMMRKGIQT.

The interval 1–77 is disordered; it reads MGNCFTKTYE…RASGGGGEMG (77 aa). Gly2 carries N-myristoyl glycine lipidation. A compositionally biased stretch (basic and acidic residues) spans 26–38; it reads ERSKARGGDEPGT. Residues 57–69 show a composition bias toward low complexity; it reads GSSSAAGALSRRA. One can recognise a Protein kinase domain in the interval 91-349; sequence YQLDRKLGSG…ASQALEHRWL (259 aa). Residues 97–105 and Lys120 each bind ATP; that span reads LGSGQFGTT. Asp215 (proton acceptor) is an active-site residue. The autoinhibitory domain stretch occupies residues 354–384; sequence ASDRPIDSAVLSRMKQFKAMNKLKQLALKVI. 4 EF-hand domains span residues 391-426, 427-462, 463-498, and 499-533; these read EEIK…LGSR, ISEA…KHKL, EKEE…YGMG, and DEAN…GIQT. Asp404, Asp406, Ser408, Thr410, Glu415, Asp440, Asp442, Ser444, Ser446, Glu451, Asp476, Asp478, Ser480, Tyr482, Glu487, Asp511, Asp513, Asp515, Arg517, and Glu522 together coordinate Ca(2+).

It belongs to the protein kinase superfamily. Ser/Thr protein kinase family. CDPK subfamily. Expressed in roots, leaf blades and developing seeds. Expressed in vascular tissues of roots and leaf blades. Expressed in the phloem tissue of the large vascular bundle in leaf blades.

Its subcellular location is the membrane. It carries out the reaction L-seryl-[protein] + ATP = O-phospho-L-seryl-[protein] + ADP + H(+). The enzyme catalyses L-threonyl-[protein] + ATP = O-phospho-L-threonyl-[protein] + ADP + H(+). With respect to regulation, activated by calcium. Autophosphorylation may play an important role in the regulation of the kinase activity. May play a role in signal transduction pathways that involve calcium as a second messenger. Functions in signal transduction pathways that positively regulate responses to low-nitrogen. Functions in multiple signaling pathways, positively regulating salt tolerance and negatively modulating rice blast fungus resistance. May promote tolerance to salt stress by negatively regulating NADPH oxidase and positively regulating reactive oxygen species (ROS) scavengers. This chain is Calcium-dependent protein kinase 12, found in Oryza sativa subsp. japonica (Rice).